A 317-amino-acid chain; its full sequence is Testis-specific Y-encoded protein 1 (317 aa).

2 disordered regions span residues 1 to 39 and 91 to 118; these read MSRP…FQVV and DEEQ…PGGP. Basic and acidic residues-rich tracts occupy residues 15-26 and 95-112; these read QGQEERERRSEE and EQRP…EQGQ.

The protein belongs to the nucleosome assembly protein (NAP) family. Phosphorylated. As to expression, testis. Probably in spermatogonia.

The protein localises to the cytoplasm. It localises to the nucleus. May be involved in sperm differentiation and proliferation. In Bos taurus (Bovine), this protein is Testis-specific Y-encoded protein 1 (TSPY1).